Reading from the N-terminus, the 126-residue chain is Small ribosomal subunit protein bS6 (126 aa).

This sequence belongs to the bacterial ribosomal protein bS6 family.

Binds together with bS18 to 16S ribosomal RNA. This is Small ribosomal subunit protein bS6 from Bordetella bronchiseptica (strain ATCC BAA-588 / NCTC 13252 / RB50) (Alcaligenes bronchisepticus).